The following is a 276-amino-acid chain: Large ribosomal subunit protein uL2 (276 aa).

Positions 224–265 (GTAMNPIDHPHGGGEGKNFGKHPVSPWGVQTKGKRTRSNKRT) are disordered.

This sequence belongs to the universal ribosomal protein uL2 family. As to quaternary structure, part of the 50S ribosomal subunit. Forms a bridge to the 30S subunit in the 70S ribosome.

One of the primary rRNA binding proteins. Required for association of the 30S and 50S subunits to form the 70S ribosome, for tRNA binding and peptide bond formation. It has been suggested to have peptidyltransferase activity; this is somewhat controversial. Makes several contacts with the 16S rRNA in the 70S ribosome. The sequence is that of Large ribosomal subunit protein uL2 from Blochmanniella floridana.